Reading from the N-terminus, the 85-residue chain is Alpha-toxin Ac2 (85 aa).

A signal peptide spans 1–19 (MNYLVMISLALLFMTGVES). The 63-residue stretch at 21 to 83 (KDGYIVDDRN…VRTKGPGRCK (63 aa)) folds into the LCN-type CS-alpha/beta domain. Intrachain disulfides connect Cys-31/Cys-82, Cys-35/Cys-55, Cys-41/Cys-65, and Cys-45/Cys-67. Lys-83 is subject to Lysine amide.

The protein belongs to the long (4 C-C) scorpion toxin superfamily. Sodium channel inhibitor family. Alpha subfamily. In terms of tissue distribution, expressed by the venom gland.

The protein resides in the secreted. Alpha toxins bind voltage-independently at site-3 of sodium channels (Nav) and inhibit the inactivation of the activated channels, thereby blocking neuronal transmission. This Androctonus crassicauda (Arabian fat-tailed scorpion) protein is Alpha-toxin Ac2.